Reading from the N-terminus, the 211-residue chain is Thymidylate kinase (211 aa).

Glycine 10–threonine 17 contacts ATP.

This sequence belongs to the thymidylate kinase family.

It carries out the reaction dTMP + ATP = dTDP + ADP. Its function is as follows. Phosphorylation of dTMP to form dTDP in both de novo and salvage pathways of dTTP synthesis. The polypeptide is Thymidylate kinase (tmk) (Lactococcus lactis subsp. lactis (strain IL1403) (Streptococcus lactis)).